Consider the following 231-residue polypeptide: Phosphoglycolate phosphatase (231 aa).

Asp9 functions as the Nucleophile in the catalytic mechanism. Mg(2+) contacts are provided by Asp9 and Asp11. Substrate is bound at residue Lys154. The Mg(2+) site is built by Asp177 and Asp181.

The protein belongs to the archaeal SPP-like hydrolase family. It depends on Mg(2+) as a cofactor.

It carries out the reaction 2-phosphoglycolate + H2O = glycolate + phosphate. In terms of biological role, catalyzes the dephosphorylation of 2-phosphoglycolate. The sequence is that of Phosphoglycolate phosphatase from Pyrococcus furiosus (strain ATCC 43587 / DSM 3638 / JCM 8422 / Vc1).